A 245-amino-acid polypeptide reads, in one-letter code: MIKQTIVALLLSVGASSVFAAGTVKVFSNGSSEAKTLTGAEHLIDLVGQPRLANSWWPGAVISEELATAAALRQQQALLTRLAEQGADSSADDAAAINALRQQIQALKVTGRQKINLDPDIVRVAERGNPPLQGNYTLWVGPPPSTVTLFGLISRPGKQPFTPGRDVASYLSDQSLLSGADRSYAWVVYPDGRTQKAPVAYWNKRHVEPMPGSIIYVGLADSVWSETPDALNADILQTLTQRIPQ.

Positions 1 to 20 (MIKQTIVALLLSVGASSVFA) are cleaved as a signal peptide.

This sequence to E.coli YmcB.

This is an uncharacterized protein from Escherichia coli (strain K12).